Here is a 229-residue protein sequence, read N- to C-terminus: 2-C-methyl-D-erythritol 4-phosphate cytidylyltransferase (229 aa).

It belongs to the IspD/TarI cytidylyltransferase family. IspD subfamily.

It catalyses the reaction 2-C-methyl-D-erythritol 4-phosphate + CTP + H(+) = 4-CDP-2-C-methyl-D-erythritol + diphosphate. It functions in the pathway isoprenoid biosynthesis; isopentenyl diphosphate biosynthesis via DXP pathway; isopentenyl diphosphate from 1-deoxy-D-xylulose 5-phosphate: step 2/6. Catalyzes the formation of 4-diphosphocytidyl-2-C-methyl-D-erythritol from CTP and 2-C-methyl-D-erythritol 4-phosphate (MEP). This chain is 2-C-methyl-D-erythritol 4-phosphate cytidylyltransferase, found in Neisseria gonorrhoeae (strain ATCC 700825 / FA 1090).